The primary structure comprises 313 residues: Foldase protein PrsA (313 aa).

The N-terminal stretch at 1–20 is a signal peptide; that stretch reads MKKKLLAGAITLLSVATLAA. Residue Cys-21 is the site of N-palmitoyl cysteine attachment. Residue Cys-21 is the site of S-diacylglycerol cysteine attachment. The 99-residue stretch at 143 to 241 folds into the PpiC domain; it reads TPDVTAQIIR…SQYYIVKLTK (99 aa).

It belongs to the PrsA family.

It localises to the cell membrane. The catalysed reaction is [protein]-peptidylproline (omega=180) = [protein]-peptidylproline (omega=0). Functionally, plays a major role in protein secretion by helping the post-translocational extracellular folding of several secreted proteins. The chain is Foldase protein PrsA from Streptococcus pneumoniae serotype 4 (strain ATCC BAA-334 / TIGR4).